The following is a 391-amino-acid chain: Multidrug resistance protein MdtL (391 aa).

Over 1-3 (MSR) the chain is Cytoplasmic. A helical transmembrane segment spans residues 4 to 24 (FLICSFALVLLYPAGIDMYLV). At 25-37 (GLPRIAADLNASE) the chain is on the periplasmic side. Residues 38 to 58 (AQLHIAFSVYLAGMAAAMLFA) traverse the membrane as a helical segment. Topologically, residues 59–75 (GKMADRSGRKPVAIPGS) are cytoplasmic. Residues 76–96 (ALFIIASVFCSLAETSTLFLA) form a helical membrane-spanning segment. The Periplasmic portion of the chain corresponds to 97–98 (GR). The helical transmembrane segment at 99-119 (FLQGLGAGCCYVVAFAILRDT) threads the bilayer. The Cytoplasmic segment spans residues 120-130 (LDDRRRAKVLS). Residues 131 to 151 (LLNGITCIIPVLAPVLGHLIM) form a helical membrane-spanning segment. At 152–157 (LKFPWQ) the chain is on the periplasmic side. The helical transmembrane segment at 158-178 (SLFWAMAMMGIAVLMLSLFIL) threads the bilayer. Over 179–202 (KETRPASPAASDKPRENSESLLNR) the chain is Cytoplasmic. Residues 203-222 (FFLSRVVITTLSVSVILTFV) form a helical membrane-spanning segment. At 223–244 (NTSPVLLMEIMGFERGEYATIM) the chain is on the periplasmic side. The helical transmembrane segment at 245–265 (ALTAGVSMTFSFSTPFALGIF) threads the bilayer. Topologically, residues 266 to 268 (KPR) are cytoplasmic. A helical membrane pass occupies residues 269 to 289 (TLMITSQVLFLAAGITLAVSP). Residues 290 to 292 (SHA) lie on the Periplasmic side of the membrane. Residues 293–313 (VSLFGITLICAGFSVGFGVAM) traverse the membrane as a helical segment. Residues 314–330 (SQALGPFSLRAGVASST) are Cytoplasmic-facing. A helical membrane pass occupies residues 331–351 (LGIAQVCGSSLWIWLAAVVGI). Topologically, residues 352–355 (GAWN) are periplasmic. A helical transmembrane segment spans residues 356–376 (MLIGILIACSIVSLLLIMFVA). The Cytoplasmic segment spans residues 377-391 (PGRPVAAHEEIHHHA).

The protein belongs to the major facilitator superfamily. DHA1 family. MdtL (TC 2.A.1.2.22) subfamily.

The protein localises to the cell inner membrane. In Shigella flexneri serotype 5b (strain 8401), this protein is Multidrug resistance protein MdtL.